The chain runs to 95 residues: Acyl carrier protein AcpXL (95 aa).

The region spanning 4-90 is the Carrier domain; it reads TATFDKVADI…NLCAKIDELR (87 aa). Ser-39 bears the O-(pantetheine 4'-phosphoryl)serine mark.

Post-translationally, 4'-phosphopantetheine is transferred from CoA to a specific serine of apo-ACP by AcpS. This modification is essential for activity because fatty acids are bound in thioester linkage to the sulfhydryl of the prosthetic group.

It is found in the cytoplasm. It functions in the pathway glycolipid biosynthesis; KDO(2)-lipid A biosynthesis. Carrier of the growing fatty acid chain in fatty acid biosynthesis. Is involved in the transfer of long hydroxylated fatty acids to lipid A. This chain is Acyl carrier protein AcpXL (acpXL), found in Rhizobium meliloti (strain 1021) (Ensifer meliloti).